Here is a 290-residue protein sequence, read N- to C-terminus: uncharacterized protein (290 aa).

One can recognise an ABC transporter domain in the interval 2–238 (LKTENLSVGY…EIVNELYDLK (237 aa)). ATP is bound at residue 34 to 41 (GPNGAGKS).

The protein belongs to the ABC transporter superfamily.

This is an uncharacterized protein from Methanocaldococcus jannaschii (strain ATCC 43067 / DSM 2661 / JAL-1 / JCM 10045 / NBRC 100440) (Methanococcus jannaschii).